The following is a 155-amino-acid chain: Large ribosomal subunit protein uL30 (155 aa).

The protein belongs to the universal ribosomal protein uL30 family. Part of the 50S ribosomal subunit.

This is Large ribosomal subunit protein uL30 from Pyrococcus horikoshii (strain ATCC 700860 / DSM 12428 / JCM 9974 / NBRC 100139 / OT-3).